The following is a 190-amino-acid chain: NAD(P)H-quinone oxidoreductase subunit I (190 aa).

2 consecutive 4Fe-4S ferredoxin-type domains span residues 55 to 84 (GRIH…VDWT) and 95 to 124 (KHYS…MTEE). Residues C64, C67, C70, C74, C104, C107, C110, and C114 each coordinate [4Fe-4S] cluster. Residues 169–190 (IEPHDLPAGSQRAGKRPEEITD) are disordered.

The protein belongs to the complex I 23 kDa subunit family. In terms of assembly, NDH-1 is composed of at least 11 different subunits. The cofactor is [4Fe-4S] cluster.

The protein resides in the cellular thylakoid membrane. It carries out the reaction a plastoquinone + NADH + (n+1) H(+)(in) = a plastoquinol + NAD(+) + n H(+)(out). The catalysed reaction is a plastoquinone + NADPH + (n+1) H(+)(in) = a plastoquinol + NADP(+) + n H(+)(out). In terms of biological role, NDH-1 shuttles electrons from an unknown electron donor, via FMN and iron-sulfur (Fe-S) centers, to quinones in the respiratory and/or the photosynthetic chain. The immediate electron acceptor for the enzyme in this species is believed to be plastoquinone. Couples the redox reaction to proton translocation, and thus conserves the redox energy in a proton gradient. The chain is NAD(P)H-quinone oxidoreductase subunit I from Microcystis aeruginosa (strain NIES-843 / IAM M-2473).